The sequence spans 240 residues: U1 small nuclear ribonucleoprotein C (240 aa).

The Matrin-type zinc-finger motif lies at 4 to 36 (YYCEYCDIYLTHSSPVGRRQHIQGRKHISAKIE). Disordered stretches follow at residues 86-122 (GMKH…SKYH) and 175-240 (IDSD…SVDA). Composition is skewed to basic and acidic residues over residues 178-194 (DPVK…DNAI) and 203-219 (DQGD…HADH). Residues 226-240 (TDGTANGNDQVSVDA) show a composition bias toward polar residues.

Belongs to the U1 small nuclear ribonucleoprotein C family. In terms of assembly, U1 snRNP is composed of the 7 core Sm proteins B/B', D1, D2, D3, E, F and G that assemble in a heptameric protein ring on the Sm site of the small nuclear RNA to form the core snRNP, and at least 3 U1 snRNP-specific proteins U1-70K, U1-A and U1-C. U1-C interacts with U1 snRNA and the 5' splice-site region of the pre-mRNA.

The protein localises to the nucleus. In terms of biological role, component of the spliceosomal U1 snRNP, which is essential for recognition of the pre-mRNA 5' splice-site and the subsequent assembly of the spliceosome. U1-C is directly involved in initial 5' splice-site recognition for both constitutive and regulated alternative splicing. The interaction with the 5' splice-site seems to precede base-pairing between the pre-mRNA and the U1 snRNA. Stimulates commitment or early (E) complex formation by stabilizing the base pairing of the 5' end of the U1 snRNA and the 5' splice-site region. The polypeptide is U1 small nuclear ribonucleoprotein C (Plasmodium vivax (strain Salvador I)).